Consider the following 74-residue polypeptide: Putative sulfur carrier protein NMA0882 (74 aa).

The active-site Cysteine persulfide intermediate is C13.

It belongs to the sulfur carrier protein TusA family.

The sequence is that of Putative sulfur carrier protein NMA0882 from Neisseria meningitidis serogroup A / serotype 4A (strain DSM 15465 / Z2491).